We begin with the raw amino-acid sequence, 222 residues long: Small ribosomal subunit protein uS3 (222 aa).

The KH type-2 domain maps to 39–109; that stretch reads IRNFVKKKVY…NILINIVEVK (71 aa).

This sequence belongs to the universal ribosomal protein uS3 family. Part of the 30S ribosomal subunit. Forms a tight complex with proteins S10 and S14.

In terms of biological role, binds the lower part of the 30S subunit head. Binds mRNA in the 70S ribosome, positioning it for translation. This Clostridium tetani (strain Massachusetts / E88) protein is Small ribosomal subunit protein uS3.